A 906-amino-acid chain; its full sequence is Rho GTPase-activating protein gacJ (906 aa).

Residues 53-117 (LEGHLNPSSH…RDNSRSDNIR (65 aa)) are disordered. The span at 69–79 (NNNNNNNNNNN) shows a compositional bias: low complexity. Basic and acidic residues predominate over residues 92–117 (SRSDSKHHNRENSKSDRDNSRSDNIR). A Rho-GAP domain is found at 161–348 (EELQSLYPDQ…YMLEYFNDIF (188 aa)). Disordered stretches follow at residues 368–415 (DTTS…SRSK), 452–864 (EIIP…SVLT), and 877–906 (ANQA…NINK). Positions 381–404 (NGGSPRTSNTPYQQQHQLSSQSMA) are enriched in polar residues. Residues 461–487 (TTTTTTTTTNTTTTTTTTNTTPNNTTT) show a composition bias toward low complexity. Pro residues-rich tracts occupy residues 494 to 510 (PVPP…PPNP) and 547 to 560 (QPPP…PSPP). Over residues 565–574 (KPTSKSDFIP) the composition is skewed to polar residues. 2 stretches are compositionally biased toward low complexity: residues 575–597 (STNN…SIPK) and 613–629 (IEEP…TTTT). Residues 637-649 (FKNNGTISSGSKS) show a composition bias toward polar residues. 2 stretches are compositionally biased toward low complexity: residues 650-663 (NPNL…NQPL) and 683-694 (SKPITTTPTIKK). The span at 708 to 721 (PPSPSSSSPSPPHN) shows a compositional bias: pro residues. 3 stretches are compositionally biased toward low complexity: residues 754 to 772 (PTIP…PTTP), 785 to 816 (PPIN…STPK), and 844 to 861 (SSPT…SSPS). Residues 880–890 (AKKNPLSNSGG) show a composition bias toward polar residues.

It localises to the cytoplasm. In terms of biological role, rho GTPase-activating protein involved in the signal transduction pathway. This Dictyostelium discoideum (Social amoeba) protein is Rho GTPase-activating protein gacJ (gacJ).